The primary structure comprises 602 residues: MPVREVSRLPELNEILEKSDSNRLIIVDFFANWCGPCRMISPAFERLSMEFGNATFLKVNTDLARDIVMRYSISAMPTFLFFKNKQQVDSVRGANESAIISTIRKHYSSTPANPNAASDEEKKFLERFVGYTELRKMHTDEVFKALARSVMPDGISDRLENGEDEKKVLQELLDWFKNDFFTWFDRPTCLKCTLKCTTEGLNGTPTKEEKEGGAGRVEVFICNGCNSEMRFPRYNDPSKLLQTRTGRCGEWANCFGLILSAAGLENRFVLDTTDHVWNEVYLKKEQRWIHVDPCENTMDRPLLYTRGWKKQLKYCIAYGHDHVTDVTWRYVFDSKKLVTQERVRQGVLENFLGKLNARQMAGATEERKRELAVRRVCELMGMMVQEAKNQRIGWEKLGEDMGGRTTGSKEWRRARGELGDNPEAQVLGKPIEFRIQNDANHVEFSYDVNRDSYSQTPEKGFVAQTFECNNIQRKVENDWKMVYLCREDGKKEGNISWHFNLAPLVATDSKKTIEKVEIRMAGIRKFENGNILIIACLGDTCMRIPASGNLTIEDPKPEVLKITVTLSGGERNQAFQHAQLFRTEKDDVAEATESMVVRVYMK.

The 129-residue stretch at 2 to 130 (PVREVSRLPE…EKKFLERFVG (129 aa)) folds into the Thioredoxin domain. 4 residues coordinate Zn(2+): cysteine 189, cysteine 192, cysteine 222, and cysteine 225. The Nucleophile role is filled by cysteine 248. Catalysis depends on residues histidine 275 and aspartate 292. The PAW domain occupies 400–602 (DMGGRTTGSK…ESMVVRVYMK (203 aa)).

This sequence belongs to the transglutaminase-like superfamily. PNGase family. Zn(2+) is required as a cofactor.

The protein localises to the cytoplasm. It is found in the endoplasmic reticulum. It catalyses the reaction Hydrolysis of an N(4)-(acetyl-beta-D-glucosaminyl)asparagine residue in which the glucosamine residue may be further glycosylated, to yield a (substituted) N-acetyl-beta-D-glucosaminylamine and a peptide containing an aspartate residue.. Specifically deglycosylates the denatured form of N-linked glycoproteins in the cytoplasm and assists their proteasome-mediated degradation. Cleaves the beta-aspartyl-glucosamine (GlcNAc) of the glycan and the amide side chain of Asn, converting Asn to Asp. Prefers proteins containing high-mannose over those bearing complex type oligosaccharides. Can recognize misfolded proteins in the endoplasmic reticulum that are exported to the cytosol to be destroyed and deglycosylate them, while it has no activity toward native proteins. Deglycosylation is a prerequisite for subsequent proteasome-mediated degradation of some, but not all, misfolded glycoproteins. Also displays oxidoreductase (thioredoxin) activity. The polypeptide is Peptide-N(4)-(N-acetyl-beta-glucosaminyl)asparagine amidase (png-1) (Caenorhabditis briggsae).